A 117-amino-acid chain; its full sequence is Large ribosomal subunit protein uL22c (117 aa).

It belongs to the universal ribosomal protein uL22 family. In terms of assembly, part of the 50S ribosomal subunit.

The protein resides in the plastid. It is found in the chloroplast. This protein binds specifically to 23S rRNA. Functionally, the globular domain of the protein is located near the polypeptide exit tunnel on the outside of the subunit, while an extended beta-hairpin is found that lines the wall of the exit tunnel in the center of the 70S ribosome. The protein is Large ribosomal subunit protein uL22c (rpl22) of Pyropia yezoensis (Susabi-nori).